The chain runs to 256 residues: Hydroxyacylglutathione hydrolase (256 aa).

The Zn(2+) site is built by His-57, His-59, Asp-61, His-62, His-115, Asp-134, and His-172.

It belongs to the metallo-beta-lactamase superfamily. Glyoxalase II family. As to quaternary structure, monomer. It depends on Zn(2+) as a cofactor.

The catalysed reaction is an S-(2-hydroxyacyl)glutathione + H2O = a 2-hydroxy carboxylate + glutathione + H(+). The protein operates within secondary metabolite metabolism; methylglyoxal degradation; (R)-lactate from methylglyoxal: step 2/2. In terms of biological role, thiolesterase that catalyzes the hydrolysis of S-D-lactoyl-glutathione to form glutathione and D-lactic acid. This Rhizobium meliloti (strain 1021) (Ensifer meliloti) protein is Hydroxyacylglutathione hydrolase.